Consider the following 696-residue polypeptide: Divalent metal transporter 1 (696 aa).

The disordered stretch occupies residues 1–31; it reads MHQDNSMRRAINQSRNGGSDSCDINNDREHD. Residues 1–236 are Cytoplasmic-facing; sequence MHQDNSMRRA…RSNRLSFMSK (236 aa). Positions 11–24 are enriched in polar residues; the sequence is INQSRNGGSDSCDI. A helical membrane pass occupies residues 237–255; the sequence is LKMYFNYFGPGWIVAIAYL. Residues 256–288 lie on the Vacuolar side of the membrane; that stretch reads DPGNICGNLNVGLIRSDDFINVNSSVKDYTGYR. A glycan (N-linked (GlcNAc...) asparagine) is linked at asparagine 278. The chain crosses the membrane as a helical span at residues 289-311; that stretch reads LLWVLVYGHILGFIFHTLSMKLG. The Cytoplasmic segment spans residues 312–331; sequence HITGLDLAALCRKEFSSKFS. A helical transmembrane segment spans residues 332 to 357; the sequence is YFLYICVQIAIWGAHLQAIIGVFVAI. Residues 358–362 lie on the Vacuolar side of the membrane; the sequence is NLILG. A helical membrane pass occupies residues 363 to 382; it reads IPVKIAILYTLIEAFAYSFL. At 383–393 the chain is on the cytoplasmic side; sequence ENKSLDLLEKV. Residues 394–416 form a helical membrane-spanning segment; that stretch reads LSLLIGILVCCFMFNVFMTPINF. The Vacuolar segment spans residues 417–435; that stretch reads QEVASSILYPRIPKGKLLD. The chain crosses the membrane as a helical span at residues 436-455; that stretch reads TMGLLGSVISAHIFYLHSNL. At 456-475 the chain is on the cytoplasmic side; that stretch reads TSKKKPVIYNDRMVKRYNKL. The chain crosses the membrane as a helical span at residues 476-499; the sequence is GTIESGGSLLVSCITNCIIVLTFA. The Vacuolar segment spans residues 500–529; the sequence is EVNISGDDRKADYNLFNAYDVMKKYFGKTS. Asparagine 502 is a glycosylation site (N-linked (GlcNAc...) asparagine). A helical transmembrane segment spans residues 530 to 546; sequence MYIWSFGLLSSGNNASF. The Cytoplasmic portion of the chain corresponds to 547–566; it reads MCEYASKSVFEGFLNKNVNP. A helical transmembrane segment spans residues 567 to 585; the sequence is FFRVIFSRIILFIMLYAYV. The Vacuolar portion of the chain corresponds to 586-596; that stretch reads SYDKYTIDQLS. Residues 597–615 form a helical membrane-spanning segment; that stretch reads NFINVVQILLLPLAIIPLY. Residues 616-634 lie on the Cytoplasmic side of the membrane; it reads RFSIHKNVLGKFAIKGAFK. The chain crosses the membrane as a helical span at residues 635-657; it reads YLVFVLVISIIVANFLLTLFDFL. Topologically, residues 658–662 are vacuolar; sequence QYAPS. A helical transmembrane segment spans residues 663-684; that stretch reads NLYVIFIFISSIFYLLFIIYFF. At 685 to 696 the chain is on the cytoplasmic side; that stretch reads NMPITKTYYKDS.

This sequence belongs to the NRAMP (TC 2.A.55) family.

It is found in the vacuole membrane. It catalyses the reaction Fe(2+)(in) = Fe(2+)(out). In terms of biological role, iron transporter. Required for parasite development during the blood stages. Required for full pathogenicity. This Plasmodium yoelii protein is Divalent metal transporter 1.